The following is a 406-amino-acid chain: Serine hydroxymethyltransferase (406 aa).

(6S)-5,6,7,8-tetrahydrofolate-binding positions include Leu-111 and 115 to 117; that span reads GHL. At Lys-220 the chain carries N6-(pyridoxal phosphate)lysine.

The protein belongs to the SHMT family. In terms of assembly, homodimer. Requires pyridoxal 5'-phosphate as cofactor.

It is found in the cytoplasm. It catalyses the reaction (6R)-5,10-methylene-5,6,7,8-tetrahydrofolate + glycine + H2O = (6S)-5,6,7,8-tetrahydrofolate + L-serine. Its pathway is one-carbon metabolism; tetrahydrofolate interconversion. The protein operates within amino-acid biosynthesis; glycine biosynthesis; glycine from L-serine: step 1/1. In terms of biological role, catalyzes the reversible interconversion of serine and glycine with tetrahydrofolate (THF) serving as the one-carbon carrier. This reaction serves as the major source of one-carbon groups required for the biosynthesis of purines, thymidylate, methionine, and other important biomolecules. Also exhibits THF-independent aldolase activity toward beta-hydroxyamino acids, producing glycine and aldehydes, via a retro-aldol mechanism. This Mycoplasma pneumoniae (strain ATCC 29342 / M129 / Subtype 1) (Mycoplasmoides pneumoniae) protein is Serine hydroxymethyltransferase.